The primary structure comprises 333 residues: Structure-specific endonuclease subunit SLX1 homolog (333 aa).

The GIY-YIG domain maps to 68-157 (DFFGVYCLLS…KSRRLRLLNL (90 aa)). An SLX1-type zinc finger spans residues 237–293 (CSLCLKPILSISELLRCHANETCKSHFHMRCLSKHALNAVDEYRTSLFPIQGQCPKC).

It belongs to the SLX1 family. Forms a heterodimer with a member of the SLX4 family. A divalent metal cation serves as cofactor.

It is found in the nucleus. Its function is as follows. Catalytic subunit of a heterodimeric structure-specific endonuclease that resolves DNA secondary structures generated during DNA repair and recombination. Has endonuclease activity towards branched DNA substrates, introducing single-strand cuts in duplex DNA close to junctions with ss-DNA. The protein is Structure-specific endonuclease subunit SLX1 homolog of Brugia malayi (Filarial nematode worm).